The following is a 338-amino-acid chain: Glycerol-3-phosphate dehydrogenase [NAD(P)+] (338 aa).

The NADPH site is built by serine 14, tyrosine 15, histidine 35, and lysine 109. Residues lysine 109, glycine 138, and threonine 140 each contribute to the sn-glycerol 3-phosphate site. Alanine 142 contacts NADPH. Sn-glycerol 3-phosphate contacts are provided by lysine 194, aspartate 247, serine 257, arginine 258, and asparagine 259. Catalysis depends on lysine 194, which acts as the Proton acceptor. Position 258 (arginine 258) interacts with NADPH. NADPH contacts are provided by valine 282 and glutamate 284.

This sequence belongs to the NAD-dependent glycerol-3-phosphate dehydrogenase family.

The protein localises to the cytoplasm. The catalysed reaction is sn-glycerol 3-phosphate + NAD(+) = dihydroxyacetone phosphate + NADH + H(+). It carries out the reaction sn-glycerol 3-phosphate + NADP(+) = dihydroxyacetone phosphate + NADPH + H(+). It functions in the pathway membrane lipid metabolism; glycerophospholipid metabolism. Functionally, catalyzes the reduction of the glycolytic intermediate dihydroxyacetone phosphate (DHAP) to sn-glycerol 3-phosphate (G3P), the key precursor for phospholipid synthesis. The protein is Glycerol-3-phosphate dehydrogenase [NAD(P)+] of Shewanella baltica (strain OS155 / ATCC BAA-1091).